Reading from the N-terminus, the 220-residue chain is Transcriptional regulatory protein SpaR (220 aa).

Residues 3-115 (KILAVDDEKD…ELSARVNAHL (113 aa)) enclose the Response regulatory domain. The residue at position 51 (Asp-51) is a 4-aspartylphosphate. Residues 124 to 220 (QSKRVISGFL…TVWGVGYKWE (97 aa)) constitute a DNA-binding region (ompR/PhoB-type).

Phosphorylated by SpaK.

It localises to the cytoplasm. Member of the two-component regulatory system SpaK/SpaR involved in the regulation of the biosynthesis of lantibiotic subtilin. SpaR may function as a regulatory protein. The chain is Transcriptional regulatory protein SpaR (spaR) from Bacillus subtilis.